A 284-amino-acid polypeptide reads, in one-letter code: L-ribulose-5-phosphate 3-epimerase UlaE (284 aa).

It belongs to the L-ribulose-5-phosphate 3-epimerase family.

It carries out the reaction L-ribulose 5-phosphate = L-xylulose 5-phosphate. Its pathway is cofactor degradation; L-ascorbate degradation; D-xylulose 5-phosphate from L-ascorbate: step 3/4. Functionally, catalyzes the isomerization of L-xylulose-5-phosphate to L-ribulose-5-phosphate. Is involved in the anaerobic L-ascorbate utilization. The chain is L-ribulose-5-phosphate 3-epimerase UlaE from Shigella flexneri.